The chain runs to 101 residues: Large ribosomal subunit protein bL28 (101 aa).

The protein belongs to the bacterial ribosomal protein bL28 family.

The polypeptide is Large ribosomal subunit protein bL28 (Methylorubrum populi (strain ATCC BAA-705 / NCIMB 13946 / BJ001) (Methylobacterium populi)).